The sequence spans 164 residues: Glycine cleavage system H protein, mitochondrial (164 aa).

Residues 1 to 34 (MALRLWASSAANALKISCSGATRAAPAYSISRYF) constitute a mitochondrion transit peptide. Residues 56–138 (VATIGITDHA…YEDGWMIKVK (83 aa)) form the Lipoyl-binding domain. At K97 the chain carries N6-lipoyllysine.

Belongs to the GcvH family. The glycine cleavage system is composed of four proteins: P, T, L and H. (R)-lipoate serves as cofactor.

The protein resides in the mitochondrion. Its function is as follows. The glycine cleavage system catalyzes the degradation of glycine. The H protein shuttles the methylamine group of glycine from the P protein to the T protein. The sequence is that of Glycine cleavage system H protein, mitochondrial (GDCSH) from Oryza sativa subsp. indica (Rice).